The chain runs to 476 residues: MMTAKAVDKIPVTLSGFVHQLSDNIYPVEDLAATSVTIFPNAELGGPFDQMNGVAGDGMINIDMTGEKRSLDLPYPSSFAPVSAPRNQTFTYMGKFSIDPQYPGASCYPEGIINIVSAGILQGVTSPASTTASSSVTSASPNPLATGPLGVCTMSQTQPDLDHLYSPPPPPPPYSGCAGDLYQDPSAFLSAATTSTSSSLAYPPPPSYPSPKPATDPGLFPMIPDYPGFFPSQCQRDLHGTAGPDRKPFPCPLDTLRVPPPLTPLSTIRNFTLGGPSAGVTGPGASGGSEGPRLPGSSSAAAAAAAAAAYNPHHLPLRPILRPRKYPNRPSKTPVHERPYPCPAEGCDRRFSRSDELTRHIRIHTGHKPFQCRICMRNFSRSDHLTTHIRTHTGEKPFACDYCGRKFARSDERKRHTKIHLRQKERKSSAPSASVPAPSTASCSGGVQPGGTLCSSNSSSLGGGPLAPCSSRTRTP.

The span at 127–141 (PASTTASSSVTSASP) shows a compositional bias: low complexity. A disordered region spans residues 127 to 178 (PASTTASSSVTSASPNPLATGPLGVCTMSQTQPDLDHLYSPPPPPPPYSGCA). The short motif at 162–165 (DHLY) is the HCFC1-binding-motif (HBM) element. Residue Lys-247 is modified to N6-acetyllysine; by EP300. 2 disordered regions span residues 275 to 300 (GPSA…SSSA) and 318 to 341 (RPIL…RPYP). The segment covering 281-290 (TGPGASGGSE) has biased composition (gly residues). 3 C2H2-type zinc fingers span residues 340-364 (YPCP…IRIH), 370-392 (FQCR…IRTH), and 398-420 (FACD…TKIH). The tract at residues 412 to 476 (ERKRHTKIHL…APCSSRTRTP (65 aa)) is disordered. The segment covering 415–425 (RHTKIHLRQKE) has biased composition (basic residues). Residues 429–476 (SAPSASVPAPSTASCSGGVQPGGTLCSSNSSSLGGGPLAPCSSRTRTP) are compositionally biased toward low complexity.

The protein belongs to the EGR C2H2-type zinc-finger protein family. Interacts with HCFC1. Interacts with WWP2. Interacts with UBC9. Interacts with CITED1. Interacts (via phosphorylated form) with SFN. In terms of processing, ubiquitinated by WWP2 leading to proteasomal degradation. Post-translationally, acetylated at Lys-247. May be deacetylated by HDAC6, HDAC10 or SIRT1.

The protein localises to the nucleus. It participates in protein modification; protein sumoylation. In terms of biological role, sequence-specific DNA-binding transcription factor. Plays a role in hindbrain segmentation by regulating the expression of a subset of homeobox containing genes and in Schwann cell myelination by regulating the expression of genes involved in the formation and maintenance of myelin. Binds to two EGR2-consensus sites EGR2A (5'-CTGTAGGAG-3') and EGR2B (5'-ATGTAGGTG-3') in the HOXB3 enhancer and promotes HOXB3 transcriptional activation. Binds to specific DNA sites located in the promoter region of HOXA4, HOXB2 and ERBB2. Regulates hindbrain segmentation by controlling the expression of Hox genes, such as HOXA4, HOXB3 and HOXB2, and thereby specifying odd and even rhombomeres. Promotes the expression of HOXB3 in the rhombomere r5 in the hindbrain. Regulates myelination in the peripheral nervous system after birth, possibly by regulating the expression of myelin proteins, such as MPZ, and by promoting the differentiation of Schwann cells. Involved in the development of the jaw openener musculature, probably by playing a role in its innervation through trigeminal motor neurons. May play a role in adipogenesis, possibly by regulating the expression of CEBPB. E3 SUMO-protein ligase helping SUMO1 conjugation to its coregulators NAB1 and NAB2, whose sumoylation down-regulates EGR2 transcriptional activity. This Homo sapiens (Human) protein is E3 SUMO-protein ligase EGR2 (EGR2).